Consider the following 95-residue polypeptide: Fatty acid-binding protein, liver (95 aa).

N6-succinyllysine occurs at positions 13 and 18. Ser-21 carries the post-translational modification Phosphoserine. Lys-28 is modified (N6-succinyllysine). Phosphothreonine is present on Thr-33. Ser-38 bears the Phosphoserine mark. Lys-39, Lys-47, and Lys-59 each carry N6-succinyllysine. Ser-69 is modified (phosphoserine). Lys-90 carries the post-translational modification N6-succinyllysine.

The protein belongs to the calycin superfamily. Fatty-acid binding protein (FABP) family. Monomer.

It is found in the cytoplasm. Functionally, this protein binds free fatty acids and their coenzyme A derivatives, bilirubin, and some other small molecules in the cytoplasm; it may be involved in intracellular lipid transport. The protein is Fatty acid-binding protein, liver (FABP1) of Chaetophractus villosus (South American armadillo).